A 244-amino-acid chain; its full sequence is 1-(5-phosphoribosyl)-5-[(5-phosphoribosylamino)methylideneamino] imidazole-4-carboxamide isomerase (244 aa).

Asp-8 functions as the Proton acceptor in the catalytic mechanism. Asp-131 acts as the Proton donor in catalysis.

The protein belongs to the HisA/HisF family.

It is found in the cytoplasm. It catalyses the reaction 1-(5-phospho-beta-D-ribosyl)-5-[(5-phospho-beta-D-ribosylamino)methylideneamino]imidazole-4-carboxamide = 5-[(5-phospho-1-deoxy-D-ribulos-1-ylimino)methylamino]-1-(5-phospho-beta-D-ribosyl)imidazole-4-carboxamide. Its pathway is amino-acid biosynthesis; L-histidine biosynthesis; L-histidine from 5-phospho-alpha-D-ribose 1-diphosphate: step 4/9. The sequence is that of 1-(5-phosphoribosyl)-5-[(5-phosphoribosylamino)methylideneamino] imidazole-4-carboxamide isomerase from Thermomicrobium roseum (strain ATCC 27502 / DSM 5159 / P-2).